The sequence spans 130 residues: MTTESLETLVEQLSGLTVLELSQLKKMLEEKWDVTAAAPVVAVAGAAAAGDAPASAEPTEFAVILEDVPADKKIGVLKVVREVTGLALKEAKEMTEGLPKTVKEKTSKSDAEDTVKKLQEAGAKAVAKGL.

Belongs to the bacterial ribosomal protein bL12 family. As to quaternary structure, homodimer. Part of the ribosomal stalk of the 50S ribosomal subunit. Forms a multimeric L10(L12)X complex, where L10 forms an elongated spine to which 2 to 4 L12 dimers bind in a sequential fashion. Binds GTP-bound translation factors.

In terms of biological role, forms part of the ribosomal stalk which helps the ribosome interact with GTP-bound translation factors. Is thus essential for accurate translation. The chain is Large ribosomal subunit protein bL12 from Chlamydia muridarum (strain MoPn / Nigg).